The chain runs to 123 residues: Transmembrane protein 049L (123 aa).

A run of 2 helical transmembrane segments spans residues 67–87 (VFGA…LWLV) and 104–121 (LSLQ…GVYN).

It is found in the membrane. This Acheta domesticus (House cricket) protein is Transmembrane protein 049L.